A 436-amino-acid chain; its full sequence is Trigger factor (436 aa).

Positions 161–246 (EDQLNIDFVG…VNTVSEPKLP (86 aa)) constitute a PPIase FKBP-type domain.

Belongs to the FKBP-type PPIase family. Tig subfamily.

The protein resides in the cytoplasm. The enzyme catalyses [protein]-peptidylproline (omega=180) = [protein]-peptidylproline (omega=0). Functionally, involved in protein export. Acts as a chaperone by maintaining the newly synthesized protein in an open conformation. Functions as a peptidyl-prolyl cis-trans isomerase. In Pseudomonas fluorescens (strain Pf0-1), this protein is Trigger factor.